The sequence spans 122 residues: Holo-[acyl-carrier-protein] synthase (122 aa).

Asp9 and Glu58 together coordinate Mg(2+).

This sequence belongs to the P-Pant transferase superfamily. AcpS family. Mg(2+) serves as cofactor.

The protein resides in the cytoplasm. The catalysed reaction is apo-[ACP] + CoA = holo-[ACP] + adenosine 3',5'-bisphosphate + H(+). Functionally, transfers the 4'-phosphopantetheine moiety from coenzyme A to a Ser of acyl-carrier-protein. The sequence is that of Holo-[acyl-carrier-protein] synthase from Chlamydia caviae (strain ATCC VR-813 / DSM 19441 / 03DC25 / GPIC) (Chlamydophila caviae).